The chain runs to 581 residues: Bifunctional lycopene cyclase/phytoene synthase (581 aa).

The segment at 1–243 (MGFDYALVHL…IVFGQLAFDN (243 aa)) is lycopene beta-cyclase. Helical transmembrane passes span 3–23 (FDYALVHLKYTIPPAVLLTLL), 35–55 (KVAFLVTIAVVATIPWDSYLI), 65–85 (HVIIGPTLFDIPLEEVFFFVV), 120–140 (LKRLIGQAILLGAIAWGWFCV), 152–172 (ILIWAGPFLLLLWSLAYQFII), 173–193 (GLPFTNTLLPIVLPTLYLWIV), and 221–241 (IEEALFFLLTNVLIVFGQLAF). Residues 250 to 581 (AFPHLFPDPS…RVLVAWRTLN (332 aa)) are phytoene synthase.

This sequence in the N-terminal section; belongs to the lycopene beta-cyclase family. The protein in the C-terminal section; belongs to the phytoene/squalene synthase family.

It localises to the membrane. It carries out the reaction all-trans-lycopene = gamma-carotene. The catalysed reaction is gamma-carotene = all-trans-beta-carotene. The enzyme catalyses 2 (2E,6E,10E)-geranylgeranyl diphosphate = 15-cis-phytoene + 2 diphosphate. It participates in carotenoid biosynthesis; beta-carotene biosynthesis. It functions in the pathway carotenoid biosynthesis; phytoene biosynthesis; all-trans-phytoene from geranylgeranyl diphosphate: step 1/1. Functionally, bifunctional enzyme that catalyzes the reactions from geranylgeranyl diphosphate to phytoene (phytoene synthase) and lycopene to beta-carotene via the intermediate gamma-carotene (lycopene cyclase). This is Bifunctional lycopene cyclase/phytoene synthase from Leptosphaeria maculans (strain JN3 / isolate v23.1.3 / race Av1-4-5-6-7-8) (Blackleg fungus).